A 128-amino-acid chain; its full sequence is Sulfurtransferase TusD (128 aa).

C78 acts as the Cysteine persulfide intermediate in catalysis.

Belongs to the DsrE/TusD family. As to quaternary structure, heterohexamer, formed by a dimer of trimers. The hexameric TusBCD complex contains 2 copies each of TusB, TusC and TusD. The TusBCD complex interacts with TusE.

It localises to the cytoplasm. Its function is as follows. Part of a sulfur-relay system required for 2-thiolation of 5-methylaminomethyl-2-thiouridine (mnm(5)s(2)U) at tRNA wobble positions. Accepts sulfur from TusA and transfers it in turn to TusE. The chain is Sulfurtransferase TusD from Escherichia coli O45:K1 (strain S88 / ExPEC).